We begin with the raw amino-acid sequence, 301 residues long: N-acetylmuramic acid 6-phosphate etherase (301 aa).

The region spanning 59 to 222 (TSEALMHGGR…STSVMVKLGK (164 aa)) is the SIS domain. The active-site Proton donor is the E87. E118 is a catalytic residue.

It belongs to the GCKR-like family. MurNAc-6-P etherase subfamily. In terms of assembly, homodimer.

The enzyme catalyses N-acetyl-D-muramate 6-phosphate + H2O = N-acetyl-D-glucosamine 6-phosphate + (R)-lactate. It functions in the pathway amino-sugar metabolism; N-acetylmuramate degradation. Specifically catalyzes the cleavage of the D-lactyl ether substituent of MurNAc 6-phosphate, producing GlcNAc 6-phosphate and D-lactate. This chain is N-acetylmuramic acid 6-phosphate etherase, found in Picosynechococcus sp. (strain ATCC 27264 / PCC 7002 / PR-6) (Agmenellum quadruplicatum).